Here is a 150-residue protein sequence, read N- to C-terminus: Transcriptional repressor NrdR (150 aa).

A zinc finger spans residues 3–34 (CPFCAHPDSKVVDSRPDKGGAAIRRRRECESC). The region spanning 49–139 (PLVLKKDGRR…VYRSFKDVNE (91 aa)) is the ATP-cone domain.

This sequence belongs to the NrdR family. It depends on Zn(2+) as a cofactor.

Its function is as follows. Negatively regulates transcription of bacterial ribonucleotide reductase nrd genes and operons by binding to NrdR-boxes. The chain is Transcriptional repressor NrdR from Geobacter metallireducens (strain ATCC 53774 / DSM 7210 / GS-15).